The sequence spans 250 residues: Kv channel-interacting protein 4 (250 aa).

Residues 2-44 (NVRRVESISAQLEEASSTGGFLYAQNNTKRSIKERLMKLLPCS) are KIS. Ser17 and Ser56 each carry phosphoserine. One can recognise an EF-hand 1; degenerate domain in the interval 61-117 (LEMATVRHRPEALELLEAQSKFTKKELQILYRGFKNECPSGVVNEETFKEIYSQFFP). EF-hand domains are found at residues 120–155 (DSTT…LLRG), 156–191 (TVQE…IYDM), and 204–239 (APRQ…DENI). Ca(2+)-binding residues include Asp133, Asp135, Asn137, Asp144, Asp169, Asn171, Asp173, Tyr175, Glu180, Asp217, Asn219, Asp221, and Glu228. The interaction with KCND2 stretch occupies residues 237 to 250 (ENIMRSMQLFENVI).

The protein belongs to the recoverin family. As to quaternary structure, component of heteromultimeric potassium channels. Identified in potassium channel complexes containing KCND1, KCND2, KCND3, KCNIP1, KCNIP2, KCNIP3, KCNIP4, DPP6 and DPP10. Interacts with the C-terminus of PSEN2 and probably PSEN1. Interacts with KCND2 and KCND3. In terms of tissue distribution, expressed in brain. Highly expressed by neurons in layers II-IV of cortex and in hippocampus, thalamus and the Purkinje cell layer of the cerebellum.

It localises to the cell membrane. The protein resides in the cytoplasm. It is found in the peroxisome. Its function is as follows. Regulatory subunit of Kv4/D (Shal)-type voltage-gated rapidly inactivating A-type potassium channels, such as KCND2/Kv4.2 and KCND3/Kv4.3. Modulates channel expression at the cell membrane, gating characteristics, inactivation kinetics and rate of recovery from inactivation in a calcium-dependent and isoform-specific manner. The protein is Kv channel-interacting protein 4 (Kcnip4) of Mus musculus (Mouse).